Reading from the N-terminus, the 1263-residue chain is Kinesin-like protein KIN-12E (1263 aa).

Residues 21–44 (PAPSESLRSVPCTPEANTVSRDNH) are disordered. Residues 35 to 44 (EANTVSRDNH) show a composition bias toward polar residues. One can recognise a Kinesin motor domain in the interval 93–430 (NVQVIIRTRP…LKFAQRAKLI (338 aa)). 174 to 181 (GQTGSGKT) is an ATP binding site. Coiled-coil stretches lie at residues 679 to 737 (SKKL…KIRS), 764 to 805 (AEAH…AEEN), 831 to 881 (ALEV…KRLL), 905 to 966 (SEKS…HQSE), 1091 to 1168 (TDLL…TIQE), and 1193 to 1251 (LRKE…VLSL).

Belongs to the TRAFAC class myosin-kinesin ATPase superfamily. Kinesin family. KIN-12 subfamily.

This Arabidopsis thaliana (Mouse-ear cress) protein is Kinesin-like protein KIN-12E.